The following is a 101-amino-acid chain: Ferredoxin-3 (101 aa).

4Fe-4S ferredoxin-type domains lie at 17–46 and 70–100; these read YLMK…LHGL and KVMA…HAAL. [4Fe-4S] cluster-binding residues include C26, C29, C32, C36, C80, C83, C86, and C90.

As to quaternary structure, homodimer. The cofactor is [4Fe-4S] cluster.

In terms of biological role, ferredoxins are iron-sulfur proteins that transfer electrons in a wide variety of metabolic reactions. This is Ferredoxin-3 (fdxB) from Rhodobacter capsulatus (Rhodopseudomonas capsulata).